The primary structure comprises 334 residues: METDIVIIGAGPIGIFTAFQAGMLDMRCHVIDVLDQAGGQCTALYSEKPIYDIPGYPVITAQKLIEQLMEQASPFEPVYHLSQKVEKISNNEGENFTIITNIGTEVKCKAVIIAAGNGMFEPNRPPLSGILEYENKSVFYSVNKISDFQDKTIVIAGGGDSAADWTVELSKVAKKIYVIHRRKEFRCTPETRNKLESLENDGKIELVVPYQLHELAGGNGQLRAVIVKNIASKEEREISADFLLPFFGLSMNLGPINNWGIELEHGRIIVDPATLRTSRDRIYAIGDIATYPDKLKLILNGFAESAMACYHIYKVIHNSPVNFQYSTSKGIHRN.

FAD is bound by residues Asp32, Gln40, Tyr45, Val85, Phe120, Asp287, and Thr327.

This sequence belongs to the ferredoxin--NADP reductase type 2 family. In terms of assembly, homodimer. FAD serves as cofactor.

The enzyme catalyses 2 reduced [2Fe-2S]-[ferredoxin] + NADP(+) + H(+) = 2 oxidized [2Fe-2S]-[ferredoxin] + NADPH. The chain is Ferredoxin--NADP reductase from Wolbachia pipientis subsp. Culex pipiens (strain wPip).